The sequence spans 255 residues: uncharacterized protein (255 aa).

Basic residues predominate over residues 1–10 (MSDSIHRRKV). Positions 1–78 (MSDSIHRRKV…SPMRGLPMEE (78 aa)) are disordered. The span at 44 to 61 (VFERSFSEPSLNRHRDGQ) shows a compositional bias: basic and acidic residues.

This is an uncharacterized protein from Arabidopsis thaliana (Mouse-ear cress).